The following is an 881-amino-acid chain: MYMSTDEIREKFLQFFESKGHLRLPSFSLIPKNDKSLLLINAGMAPLKPYFLGIEEPPRRRITTCQKCIRTPDIDKVGKTARHATFFEMLGNFSFGDYFKKEAITWAWEFVTEILKLPKERLWVTIYEEDDEAFEIWHKEVGLEEGRIKRMGKEDNFWEIGTGPCGPCSEIYFDRGVDKGCGKETCGIGCDCDRYVEFWNLVFTQFDKDENGVYHRLKNPNIDTGMGLERIAAIMQGVDSLFDIDIVKAIRDKICEITGCEYGKDSEKDVSIRVITDHIRGTVFMIGDGILPSNEGRGYVLRRLIRRAARHGRMLGKRETFLHLIVDTVIEAYKSPYPELIQKGEYIKKVLYNEESRFNQTIDIGLELLENEIDRLKKNKENVLKGEIAFKLYDTYGFPLDLTREIAAEKGIIVDQAGFDRLMQEQKERARMAQKELENIGWKDINITIEDEVETVFVGYDTLETQSRVLKIFSNDDEVSYAKEGDICYIILDKTPFYAESGGQVADKGVLETEGGVAEVLDVKKGPKGTILHKAKVIKGEIAVDNNIFAKVNKNLRLATMKNHTATHLLHSSLRRILGEHATQSGSLVEPERLRFDFAHFEPLSEEQIVEIEKMVNDIIQQAIPVEKIQTDLDSAIKMGATALFDEKYSNIVRVIKIGDFSMELCGGTHVDNTGQIGMFKIISESSVAAGVRRIEAITGNKVYEFMLNNQKVLKDIRNKLKANSDSEIVAKINQLEERITALEKELEKHKLLLVDNELSLLYNEGLQIGEFRLIINKKETHDTDYIRLLTDRVREKDSKAIVLNLIKQDKKAIVLMACSKEAVKKGIDCGKTVKDVCEVLGGKGGGRPDFAQGGGNKIENLDLAAQRAIELIKSSIEGGS.

His564, His568, Cys666, and His670 together coordinate Zn(2+).

Belongs to the class-II aminoacyl-tRNA synthetase family. Requires Zn(2+) as cofactor.

It is found in the cytoplasm. The enzyme catalyses tRNA(Ala) + L-alanine + ATP = L-alanyl-tRNA(Ala) + AMP + diphosphate. Its function is as follows. Catalyzes the attachment of alanine to tRNA(Ala) in a two-step reaction: alanine is first activated by ATP to form Ala-AMP and then transferred to the acceptor end of tRNA(Ala). Also edits incorrectly charged Ser-tRNA(Ala) and Gly-tRNA(Ala) via its editing domain. This Caldicellulosiruptor saccharolyticus (strain ATCC 43494 / DSM 8903 / Tp8T 6331) protein is Alanine--tRNA ligase.